The sequence spans 337 residues: Sorting nexin-15 (337 aa).

Residues 1–130 (MSRQAKDDFL…EFFRGGEVTR (130 aa)) enclose the PX domain. Arg-51, Ser-53, Arg-87, and Arg-96 together coordinate a 1,2-diacyl-sn-glycero-3-phospho-(1D-myo-inositol-3-phosphate). Position 105 is an omega-N-methylarginine (Arg-105). The disordered stretch occupies residues 133 to 156 (EVSRDLRILPPPLIPTPPPDEARL). Pro residues predominate over residues 141-151 (LPPPLIPTPPP). Ser-201 and Ser-227 each carry phosphoserine. Residues 244 to 270 (LDQEPWEPGGQEEEEAEDGEPAPAYLG) form a disordered region. Over residues 253-263 (GQEEEEAEDGE) the composition is skewed to acidic residues. Residues 265–337 (APAYLGQATE…RAEMLHTHLP (73 aa)) enclose the MIT domain.

It belongs to the sorting nexin family. As to quaternary structure, homodimer. Interacts with SNX1, SNX2 and SNX4.

It localises to the cytoplasm. It is found in the membrane. Its subcellular location is the cytoplasmic vesicle membrane. In terms of biological role, may be involved in several stages of intracellular trafficking. Overexpression of SNX15 disrupts the normal trafficking of proteins from the plasma membrane to recycling endosomes or the TGN. This Mus musculus (Mouse) protein is Sorting nexin-15 (Snx15).